The primary structure comprises 232 residues: Protein Mis18-alpha (232 aa).

A phosphoserine mark is found at serine 36, serine 39, and serine 40. The 99-residue stretch at 79–177 (PLVFLCSGCR…SVEAIESYVL (99 aa)) folds into the Mis18 domain. 4 residues coordinate Zn(2+): cysteine 84, cysteine 87, cysteine 140, and cysteine 143. Lysine 161 participates in a covalent cross-link: Glycyl lysine isopeptide (Lys-Gly) (interchain with G-Cter in SUMO2). At serine 232 the chain carries Phosphoserine.

It belongs to the mis18 family. As to quaternary structure, homodimer, and heterodimer with OIP5/MIS18B. Identified in a complex containing MIS18A, OIP5/MIS18B, MIS18BP1, RBBP7 and RBBP4.

It is found in the nucleus. Its subcellular location is the chromosome. The protein resides in the centromere. Required for recruitment of CENPA to centromeres and normal chromosome segregation during mitosis. This is Protein Mis18-alpha (MIS18A) from Pan troglodytes (Chimpanzee).